The sequence spans 228 residues: 7-cyano-7-deazaguanine synthase (228 aa).

9–19 (LSGGPDSTTVL) provides a ligand contact to ATP. Zn(2+)-binding residues include C193, C203, C206, and C209.

Belongs to the QueC family. Requires Zn(2+) as cofactor.

The enzyme catalyses 7-carboxy-7-deazaguanine + NH4(+) + ATP = 7-cyano-7-deazaguanine + ADP + phosphate + H2O + H(+). It participates in purine metabolism; 7-cyano-7-deazaguanine biosynthesis. Its function is as follows. Catalyzes the ATP-dependent conversion of 7-carboxy-7-deazaguanine (CDG) to 7-cyano-7-deazaguanine (preQ(0)). The sequence is that of 7-cyano-7-deazaguanine synthase from Rickettsia massiliae (strain Mtu5).